The primary structure comprises 233 residues: Transcriptional regulatory protein WalR (233 aa).

A Response regulatory domain is found at 4–117; sequence KVVVVDDEKP…ELIARVKANL (114 aa). Aspartate 53 is modified (4-aspartylphosphate). The segment at residues 132-231 is a DNA-binding region (ompR/PhoB-type); that stretch reads SNEITIKDIV…RRGVGYFLQQ (100 aa).

In terms of processing, phosphorylated by WalK.

It is found in the cytoplasm. Functionally, member of the two-component regulatory system WalK/WalR. The polypeptide is Transcriptional regulatory protein WalR (walR) (Staphylococcus saprophyticus subsp. saprophyticus (strain ATCC 15305 / DSM 20229 / NCIMB 8711 / NCTC 7292 / S-41)).